A 204-amino-acid polypeptide reads, in one-letter code: Large ribosomal subunit protein eL15 (204 aa).

The protein belongs to the eukaryotic ribosomal protein eL15 family. In terms of assembly, component of the large ribosomal subunit.

The protein localises to the cytoplasm. Functionally, component of the large ribosomal subunit. The ribosome is a large ribonucleoprotein complex responsible for the synthesis of proteins in the cell. The sequence is that of Large ribosomal subunit protein eL15 (rpl15) from Tachysurus fulvidraco (Yellow catfish).